The primary structure comprises 197 residues: Recombination protein RecR (197 aa).

Residues 57 to 72 (CSTCFGITESDPCHLC) form a C4-type zinc finger. The Toprim domain maps to 79-174 (ASICVVEEPQ…KVTRLAHGIP (96 aa)).

The protein belongs to the RecR family.

In terms of biological role, may play a role in DNA repair. It seems to be involved in an RecBC-independent recombinational process of DNA repair. It may act with RecF and RecO. This Geotalea uraniireducens (strain Rf4) (Geobacter uraniireducens) protein is Recombination protein RecR.